An 899-amino-acid polypeptide reads, in one-letter code: Valine--tRNA ligase (899 aa).

Residues 60–70 carry the 'HIGH' region motif; sequence PNVTGVLHMGH. The 'KMSKS' region signature appears at 539-543; that stretch reads KMSKS. K542 provides a ligand contact to ATP. Positions 827–898 form a coiled coil; it reads AGLIDLDEEQ…KQGLEKLAAL (72 aa).

It belongs to the class-I aminoacyl-tRNA synthetase family. ValS type 1 subfamily. As to quaternary structure, monomer.

The protein resides in the cytoplasm. The catalysed reaction is tRNA(Val) + L-valine + ATP = L-valyl-tRNA(Val) + AMP + diphosphate. In terms of biological role, catalyzes the attachment of valine to tRNA(Val). As ValRS can inadvertently accommodate and process structurally similar amino acids such as threonine, to avoid such errors, it has a 'posttransfer' editing activity that hydrolyzes mischarged Thr-tRNA(Val) in a tRNA-dependent manner. This chain is Valine--tRNA ligase, found in Syntrophotalea carbinolica (strain DSM 2380 / NBRC 103641 / GraBd1) (Pelobacter carbinolicus).